We begin with the raw amino-acid sequence, 883 residues long: DNA double-strand break repair Rad50 ATPase (883 aa).

ATP contacts are provided by residues Arg-12, 32–38 (NGSGKSS), and Gln-134. The stretch at 218–420 (ELRGELGGLE…EIGSRRGELK (203 aa)) forms a coiled coil. One can recognise a Zinc-hook domain in the interval 395 to 492 (IQKARERKEE…ELVEVEKTLK (98 aa)). Zn(2+)-binding residues include Cys-440 and Cys-443. Coiled-coil stretches lie at residues 452–585 (RKEL…KKLG) and 620–741 (EDLL…LLKE). 790-795 (FLSGGE) serves as a coordination point for ATP.

This sequence belongs to the SMC family. RAD50 subfamily. As to quaternary structure, homodimer. Forms a heterotetramer composed of two Mre11 subunits and two Rad50 subunits. The cofactor is Zn(2+).

Its function is as follows. Part of the Rad50/Mre11 complex, which is involved in the early steps of DNA double-strand break (DSB) repair. The complex may facilitate opening of the processed DNA ends to aid in the recruitment of HerA and NurA. Rad50 controls the balance between DNA end bridging and DNA resection via ATP-dependent structural rearrangements of the Rad50/Mre11 complex. The polypeptide is DNA double-strand break repair Rad50 ATPase (Thermococcus kodakarensis (strain ATCC BAA-918 / JCM 12380 / KOD1) (Pyrococcus kodakaraensis (strain KOD1))).